The primary structure comprises 271 residues: Acyl-[acyl-carrier-protein]--UDP-N-acetylglucosamine O-acyltransferase (271 aa).

The protein belongs to the transferase hexapeptide repeat family. LpxA subfamily. As to quaternary structure, homotrimer.

The protein localises to the cytoplasm. The catalysed reaction is a (3R)-hydroxyacyl-[ACP] + UDP-N-acetyl-alpha-D-glucosamine = a UDP-3-O-[(3R)-3-hydroxyacyl]-N-acetyl-alpha-D-glucosamine + holo-[ACP]. It functions in the pathway glycolipid biosynthesis; lipid IV(A) biosynthesis; lipid IV(A) from (3R)-3-hydroxytetradecanoyl-[acyl-carrier-protein] and UDP-N-acetyl-alpha-D-glucosamine: step 1/6. Its function is as follows. Involved in the biosynthesis of lipid A, a phosphorylated glycolipid that anchors the lipopolysaccharide to the outer membrane of the cell. In Sulfurihydrogenibium sp. (strain YO3AOP1), this protein is Acyl-[acyl-carrier-protein]--UDP-N-acetylglucosamine O-acyltransferase.